The chain runs to 255 residues: Small ribosomal subunit protein uS2 (255 aa).

It belongs to the universal ribosomal protein uS2 family.

The sequence is that of Small ribosomal subunit protein uS2 from Geotalea daltonii (strain DSM 22248 / JCM 15807 / FRC-32) (Geobacter daltonii).